Consider the following 1385-residue polypeptide: PsbD mRNA maturation factor Nac2, chloroplastic (1385 aa).

The N-terminal 45 residues, 1 to 45 (MGALPCPAHIEHHQGLSSFGTRRVLRQSVACGAHRSRRRSLWAGA), are a transit peptide targeting the chloroplast. Residues 132–152 (GPHGAASATGAGSHSSSAGAP) show a composition bias toward low complexity. Disordered regions lie at residues 132-157 (GPHG…PTPR), 263-282 (AVAA…RSSA), 304-360 (TSSR…AAGP), 387-502 (RQQP…GHGQ), 546-568 (NGAG…SGTS), 726-756 (HADS…VAAA), and 840-899 (ARRA…APSA). Residues 271–281 (QPHEHQQERSS) are compositionally biased toward basic and acidic residues. Over residues 304-313 (TSSRRGGRSS) the composition is skewed to low complexity. Gly residues predominate over residues 403–412 (NGSGKSGSGG). 4 stretches are compositionally biased toward low complexity: residues 448–464 (APAA…RPAA), 554–568 (ASAS…SGTS), 729–744 (SSSS…SSSG), and 854–893 (ASTT…AAAG). TPR repeat units lie at residues 851–884 (RRGA…DPAS), 951–984 (GAVM…CPAD), 985–1018 (VALY…DRTD), 1019–1052 (KQLF…HPLN), 1053–1086 (TKII…DPLS), 1091–1124 (VHNR…HPNS), 1125–1158 (AALL…AGAF), 1160–1193 (AAVM…KQLN), and 1205–1238 (AWRA…APAV). Disordered stretches follow at residues 1237–1257 (AVRG…GRRP) and 1333–1385 (IQDP…ADDM). Acidic residues predominate over residues 1356 to 1365 (QDADYYEEPE). Basic and acidic residues predominate over residues 1374–1385 (AVRRPMPDADDM).

Part of 2 complexes of about 600 and less than 2000 kDa, both of which also contain non-polysomal RNA.

The protein localises to the plastid. It localises to the chloroplast stroma. In terms of biological role, involved, directly or indirectly, in the processing of the chloroplast encoded psbD mRNA to its mature form, acting via the 5'-UTR of the psbD mRNA. The last 588 amino acids of the protein are sufficient to confer stability on the transcript in vivo. The protein is PsbD mRNA maturation factor Nac2, chloroplastic (NAC2) of Chlamydomonas reinhardtii (Chlamydomonas smithii).